We begin with the raw amino-acid sequence, 491 residues long: Ligand-gated ion channel 50 (491 aa).

The first 19 residues, 1–19 (MRFLLVLQLVFFYFSAATT), serve as a signal peptide directing secretion. Residues Asn55 and Asn101 are each glycosylated (N-linked (GlcNAc...) asparagine). Cys157 and Cys171 are disulfide-bonded. A run of 3 helical transmembrane segments spans residues 241–261 (LFQSYFPTSLTVISSWVGFFF), 265–287 (SVSARITLGVSSLLALTFQFGNV), and 302–322 (VWMIFSVIFIFCTLVELAIVC). N-linked (GlcNAc...) asparagine glycosylation occurs at Asn418. A helical transmembrane segment spans residues 465 to 485 (MIMFPLSFLIFNVVYWSIYFM).

The protein belongs to the ligand-gated ion channel (TC 1.A.9) family.

It localises to the postsynaptic cell membrane. The protein localises to the cell membrane. In Caenorhabditis elegans, this protein is Ligand-gated ion channel 50 (lgc-50).